A 179-amino-acid polypeptide reads, in one-letter code: Large ribosomal subunit protein uL5 (179 aa).

This sequence belongs to the universal ribosomal protein uL5 family. In terms of assembly, part of the 50S ribosomal subunit; part of the 5S rRNA/L5/L18/L25 subcomplex. Contacts the 5S rRNA and the P site tRNA. Forms a bridge to the 30S subunit in the 70S ribosome.

This is one of the proteins that bind and probably mediate the attachment of the 5S RNA into the large ribosomal subunit, where it forms part of the central protuberance. In the 70S ribosome it contacts protein S13 of the 30S subunit (bridge B1b), connecting the 2 subunits; this bridge is implicated in subunit movement. Contacts the P site tRNA; the 5S rRNA and some of its associated proteins might help stabilize positioning of ribosome-bound tRNAs. This is Large ribosomal subunit protein uL5 from Halothermothrix orenii (strain H 168 / OCM 544 / DSM 9562).